Here is a 416-residue protein sequence, read N- to C-terminus: Serine hydroxymethyltransferase (416 aa).

(6S)-5,6,7,8-tetrahydrofolate contacts are provided by residues Leu121 and 125–127; that span reads GHL. Position 229 is an N6-(pyridoxal phosphate)lysine (Lys229).

This sequence belongs to the SHMT family. In terms of assembly, homodimer. Pyridoxal 5'-phosphate serves as cofactor.

Its subcellular location is the cytoplasm. It carries out the reaction (6R)-5,10-methylene-5,6,7,8-tetrahydrofolate + glycine + H2O = (6S)-5,6,7,8-tetrahydrofolate + L-serine. It participates in one-carbon metabolism; tetrahydrofolate interconversion. Its pathway is amino-acid biosynthesis; glycine biosynthesis; glycine from L-serine: step 1/1. Functionally, catalyzes the reversible interconversion of serine and glycine with tetrahydrofolate (THF) serving as the one-carbon carrier. This reaction serves as the major source of one-carbon groups required for the biosynthesis of purines, thymidylate, methionine, and other important biomolecules. Also exhibits THF-independent aldolase activity toward beta-hydroxyamino acids, producing glycine and aldehydes, via a retro-aldol mechanism. This chain is Serine hydroxymethyltransferase, found in Azoarcus sp. (strain BH72).